The chain runs to 484 residues: GRIP domain-containing protein RUD3 (484 aa).

Positions 1 to 15 are enriched in basic residues; the sequence is MGKNKKKTGKKAKSH. Positions 1–75 are disordered; it reads MGKNKKKTGK…GVDKQKVNDG (75 aa). A compositionally biased stretch (basic and acidic residues) spans 16–30; that stretch reads PHVEDVDETVNKPEE. Phosphoserine is present on residues Ser55 and Ser64. The segment covering 61 to 72 has biased composition (basic and acidic residues); the sequence is KDLSEGVDKQKV. A coiled-coil region spans residues 84–383; the sequence is LEDKKAGDEM…LQIGKLRHEA (300 aa). One can recognise a GRIP domain in the interval 401-452; it reads SDSESVDKELISNLLISFVSIPRADPRKFEVLELLSNFLNWDEDKKQQAGLI. Ser468 is modified (phosphoserine).

It is found in the golgi apparatus lumen. Its function is as follows. Involved in the structural organization of the cis-Golgi and in vesicle targeting/fusion stages of ER to Golgi transport. The polypeptide is GRIP domain-containing protein RUD3 (RUD3) (Saccharomyces cerevisiae (strain ATCC 204508 / S288c) (Baker's yeast)).